We begin with the raw amino-acid sequence, 251 residues long: Pyruvate formate-lyase-activating enzyme (251 aa).

The region spanning valine 15–lysine 244 is the Radical SAM core domain. 3 residues coordinate [4Fe-4S] cluster: cysteine 29, cysteine 33, and cysteine 36. S-adenosyl-L-methionine-binding positions include tyrosine 35–histidine 37, glycine 79, aspartate 134–lysine 136, and histidine 207.

This sequence belongs to the organic radical-activating enzymes family. [4Fe-4S] cluster serves as cofactor.

Its subcellular location is the cytoplasm. The enzyme catalyses glycyl-[formate C-acetyltransferase] + reduced [flavodoxin] + S-adenosyl-L-methionine = glycin-2-yl radical-[formate C-acetyltransferase] + semiquinone [flavodoxin] + 5'-deoxyadenosine + L-methionine + H(+). Activation of pyruvate formate-lyase under anaerobic conditions by generation of an organic free radical, using S-adenosylmethionine and reduced flavodoxin as cosubstrates to produce 5'-deoxy-adenosine. The protein is Pyruvate formate-lyase-activating enzyme (pflA) of Staphylococcus aureus (strain N315).